The sequence spans 184 residues: MKISCVLGKLLMLFELIHGLQDLSITCSESWLQVKLRRTPLLNDLQPLQNELSLGIGCPVNMVEVDFFGFLYLLTFCGIRVSEHGVGILIESLIVYEPTNFDFNLHIPVSCYVQRRFPIILVMRGRENDSRRECRRSVGQHRSLSHELEDLEIRPRVSYVNSVPLLSYLIVSLPKCKNKAVHSG.

Residues 1–19 (MKISCVLGKLLMLFELIHG) form the signal peptide. A glycan (N-linked (GlcNAc...) asparagine) is linked at Asn-128.

It belongs to the PLAC1 family.

It is found in the secreted. The chain is Oocyte-secreted protein 4A from Homo sapiens (Human).